The sequence spans 2522 residues: Neurogenic locus notch homolog protein 1 (2522 aa).

A signal peptide spans 1-19 (MYRIGLLVLIWSLLGLAQG). EGF-like domains follow at residues 20–57 (LRCT…ERCQ), 58–99 (YPNP…KVCL), 102–140 (VDNA…DSCQ), and 141–177 (QADP…ATCK). Topologically, residues 20–1730 (LRCTQTAEMC…ETAKPPPPLY (1711 aa)) are extracellular. 33 cysteine pairs are disulfide-bonded: cysteine 22–cysteine 35, cysteine 29–cysteine 45, cysteine 47–cysteine 56, cysteine 62–cysteine 74, cysteine 68–cysteine 87, cysteine 89–cysteine 98, cysteine 106–cysteine 117, cysteine 111–cysteine 128, cysteine 130–cysteine 139, cysteine 145–cysteine 156, cysteine 150–cysteine 165, cysteine 167–cysteine 176, cysteine 183–cysteine 194, cysteine 188–cysteine 203, cysteine 205–cysteine 214, cysteine 221–cysteine 232, cysteine 226–cysteine 242, cysteine 244–cysteine 253, cysteine 260–cysteine 271, cysteine 265–cysteine 280, cysteine 282–cysteine 291, cysteine 298–cysteine 311, cysteine 305–cysteine 320, cysteine 322–cysteine 331, cysteine 338–cysteine 349, cysteine 343–cysteine 358, cysteine 360–cysteine 369, cysteine 375–cysteine 386, cysteine 380–cysteine 397, cysteine 399–cysteine 408, cysteine 415–cysteine 428, cysteine 422–cysteine 437, and cysteine 439–cysteine 448. Residues 179–215 (DINECSQNPCRNGGQCLNEFGSYRCNCQNRFTGRNCE) form the EGF-like 5; calcium-binding domain. The 38-residue stretch at 217 to 254 (PYVPCNPSPCLNGGTCRQTDDTSYECTCLPGFSGQNCE) folds into the EGF-like 6 domain. Threonine 231 carries an O-linked (Fuc...) threonine; alternate glycan. O-linked (GalNAc...) threonine; alternate glycosylation is present at threonine 231. In terms of domain architecture, EGF-like 7; calcium-binding spans 256–292 (NIDDCPSNNCRNGGTCVDGVNTYNCQCPPDWTGQYCT). The 39-residue stretch at 294-332 (DVDECQLMPNACQNGGTCHNTYGGYNCVCVNGWTGEDCS) folds into the EGF-like 8; calcium-binding domain. The EGF-like 9; calcium-binding domain maps to 334–370 (NIDDCANAACHSGATCHDRVASFFCECPHGRTGLLCH). The EGF-like 10 domain occupies 371–409 (LDNACISNPCNEGSNCDTNPVNGKAICTCPPGYTGPACN). Residues 411 to 449 (DVDECSLGANPCEHGGRCTNTLGSFQCNCPQGYAGPRCE) enclose the EGF-like 11; calcium-binding domain. Residues threonine 431 and serine 434 each coordinate Ca(2+). Serine 434 carries O-linked (Glc...) serine glycosylation. Aspartate 451, valine 452, and glutamate 454 together coordinate Ca(2+). An EGF-like 12; calcium-binding domain is found at 451 to 487 (DVNECLSNPCQNDATCLDQIGEFQCICMPGYEGLYCE). Intrachain disulfides connect cysteine 455–cysteine 466, cysteine 460–cysteine 475, and cysteine 477–cysteine 486. O-linked (Glc...) serine glycosylation is present at serine 457. An O-linked (Fuc...) threonine glycan is attached at threonine 465. Aspartate 468 and glutamine 469 together coordinate Ca(2+). Asparagine 489, isoleucine 490, and glutamate 492 together coordinate Ca(2+). One can recognise an EGF-like 13; calcium-binding domain in the interval 489 to 525 (NIDECASNPCLHNGKCVDKINEFHCECPTGFNGNLCQ). 75 cysteine pairs are disulfide-bonded: cysteine 493–cysteine 504, cysteine 498–cysteine 513, cysteine 515–cysteine 524, cysteine 531–cysteine 542, cysteine 536–cysteine 551, cysteine 553–cysteine 562, cysteine 569–cysteine 579, cysteine 574–cysteine 588, cysteine 590–cysteine 599, cysteine 606–cysteine 617, cysteine 611–cysteine 626, cysteine 628–cysteine 637, cysteine 644–cysteine 654, cysteine 649–cysteine 663, cysteine 665–cysteine 674, cysteine 681–cysteine 692, cysteine 686–cysteine 701, cysteine 703–cysteine 712, cysteine 719–cysteine 729, cysteine 724–cysteine 738, cysteine 740–cysteine 749, cysteine 756–cysteine 767, cysteine 761–cysteine 776, cysteine 778–cysteine 787, cysteine 794–cysteine 805, cysteine 799–cysteine 814, cysteine 816–cysteine 825, cysteine 832–cysteine 843, cysteine 837–cysteine 854, cysteine 856–cysteine 865, cysteine 872–cysteine 883, cysteine 877–cysteine 892, cysteine 894–cysteine 903, cysteine 910–cysteine 921, cysteine 915–cysteine 930, cysteine 932–cysteine 941, cysteine 948–cysteine 959, cysteine 953–cysteine 968, cysteine 970–cysteine 979, cysteine 986–cysteine 997, cysteine 991–cysteine 1006, cysteine 1008–cysteine 1017, cysteine 1024–cysteine 1035, cysteine 1029–cysteine 1044, cysteine 1046–cysteine 1055, cysteine 1062–cysteine 1073, cysteine 1067–cysteine 1082, cysteine 1084–cysteine 1093, cysteine 1100–cysteine 1121, cysteine 1115–cysteine 1130, cysteine 1132–cysteine 1141, cysteine 1148–cysteine 1159, cysteine 1153–cysteine 1168, cysteine 1170–cysteine 1179, cysteine 1186–cysteine 1197, cysteine 1191–cysteine 1206, cysteine 1208–cysteine 1217, cysteine 1224–cysteine 1243, cysteine 1237–cysteine 1252, cysteine 1254–cysteine 1263, cysteine 1270–cysteine 1283, cysteine 1275–cysteine 1292, cysteine 1294–cysteine 1303, cysteine 1310–cysteine 1321, cysteine 1315–cysteine 1333, cysteine 1335–cysteine 1344, cysteine 1351–cysteine 1362, cysteine 1356–cysteine 1371, cysteine 1373–cysteine 1382, cysteine 1390–cysteine 1401, cysteine 1395–cysteine 1412, cysteine 1414–cysteine 1423, cysteine 1447–cysteine 1470, cysteine 1452–cysteine 1465, and cysteine 1461–cysteine 1477. A glycan (O-linked (Glc...) serine) is linked at serine 495. Ca(2+) contacts are provided by aspartate 506 and lysine 507. Residues 527 to 563 (DVDECASTPCKNGAKCLDGPNSYTCQCTEGFTGRHCE) enclose the EGF-like 14; calcium-binding domain. One can recognise an EGF-like 15; calcium-binding domain in the interval 565–600 (DINECIPDPCHYGTCKDGIATFTCLCRPGYTGRLCD). In terms of domain architecture, EGF-like 16; calcium-binding spans 602-638 (DINECLSQPCQNGGQCTDRENGYICTCPKGTTGVNCE). An EGF-like 17; calcium-binding domain is found at 640–675 (NLDDCASNPCDYGKCIDKIDGYECTCEPGYTGKMCN). In terms of domain architecture, EGF-like 18; calcium-binding spans 677–713 (NIDECASNPCRNGGTCKDKINGFTCVCPDGYHDHMCL). An EGF-like 19; calcium-binding domain is found at 715-750 (EVNECNSNPCIHGTCHDGINGYKCDCDAGWSGSNCD). The EGF-like 20; calcium-binding domain maps to 752-788 (NNNECESNPCMNGGTCKDMTGAYICTCRAGFSGPNCQ). The region spanning 790–826 (NINECASNPCLNRGTCIDDVAGYKCNCMLPYTGAICE) is the EGF-like 21; calcium-binding domain. The region spanning 828-866 (VLAPCSGSPCKNGGRCKESEDYETFSCECPPGWQGQTCE) is the EGF-like 22 domain. In terms of domain architecture, EGF-like 23; calcium-binding spans 868–904 (DMNECVNRPCRNGAMCQNTNGSYKCNCKPGYAGRHCE). An N-linked (GlcNAc...) asparagine glycan is attached at asparagine 887. The region spanning 906–942 (DIDDCQPNPCHNGGSCSDGINMFFCNCPAGFRGPKCE) is the EGF-like 24; calcium-binding domain. Positions 944–980 (DINECASNPCKNGANCTDCVNSYTCTCQPGFSGIHCE) constitute an EGF-like 25; calcium-binding domain. N-linked (GlcNAc...) asparagine glycosylation is present at asparagine 958. Residues 982-1018 (NTPDCTESSCFNGGTCIDGINTFSCQCPPGFTGNYCQ) form the EGF-like 26 domain. One can recognise an EGF-like 27; calcium-binding domain in the interval 1020–1056 (DINECDSKPCLNGGTCQDSYGAYKCTCPQGYTGLNCQ). 2 EGF-like domains span residues 1058 to 1094 (LVRW…VYCD) and 1096 to 1142 (PSVS…SYCE). The 37-residue stretch at 1144–1180 (QVDECSPNPCQNGATCTDYLGGYSCECVAGYHGVNCS) folds into the EGF-like 30; calcium-binding domain. Asparagine 1178 carries N-linked (GlcNAc...) asparagine glycosylation. The EGF-like 31; calcium-binding domain occupies 1182–1218 (EINECLSHPCHNGGTCIDLINTYKCSCPRGTQGVHCE). The region spanning 1220–1264 (NVDDCTPFYDSVSLEPKCFNNGKCFDRVGGYNCICPPGFVGERCE) is the EGF-like 32; calcium-binding domain. EGF-like domains follow at residues 1266–1304 (DVNE…RRCD), 1306–1345 (VVDG…ATCE), 1347–1383 (DART…ATCQ), and 1386–1424 (VVSP…LFCH). A glycan (O-linked (Fuc...) threonine; alternate) is linked at threonine 1400. Threonine 1400 carries an O-linked (GalNAc...) threonine; alternate glycan. LNR repeat units lie at residues 1447–1487 (CENE…PWKN), 1488–1529 (CTQS…CNPL), and 1530–1564 (YDQY…NMPE). Positions 1458, 1473, and 1476 each coordinate Ca(2+). N-linked (GlcNAc...) asparagine glycosylation occurs at asparagine 1487. 5 disulfide bridges follow: cysteine 1488-cysteine 1512, cysteine 1494-cysteine 1507, cysteine 1503-cysteine 1519, cysteine 1534-cysteine 1547, and cysteine 1543-cysteine 1559. Residue aspartate 1500 participates in Ca(2+) binding. A glycan (N-linked (GlcNAc...) asparagine) is linked at asparagine 1508. 5 residues coordinate Ca(2+): aspartate 1515, aspartate 1518, aspartate 1540, aspartate 1555, and aspartate 1558. Residue asparagine 1584 is glycosylated (N-linked (GlcNAc...) asparagine). A helical transmembrane segment spans residues 1731–1751 (AMFSMLVIPLLIIFVIMVVIV). At 1752–2522 (NKKRRREHGQ…QRTHIPEAFK (771 aa)) the chain is on the cytoplasmic side. ANK repeat units lie at residues 1877 to 1920 (DGFT…QLHN), 1925 to 1954 (TGET…DANV), 1958 to 1988 (MGRT…DLDA), 1992 to 2021 (DGTT…DVNA), 2025 to 2054 (FGKS…NKDM), and 2058 to 2087 (KEET…NRDI). 3 disordered regions span residues 2146-2229 (MKPS…MPLN), 2365-2404 (LMQA…PFCS), and 2449-2522 (LTPP…EAFK). Residues 2184 to 2200 (SLLDSGSSGVLSPVDSL) show a composition bias toward low complexity. The segment covering 2218–2229 (SPFQQSPSMPLN) has biased composition (polar residues). Residues 2365-2390 (LMQAQQMQQQQNLQLHQSVQQQQHQN) show a composition bias toward low complexity. Composition is skewed to polar residues over residues 2391–2404 (SNAT…PFCS) and 2449–2469 (LTPP…SHQL). Positions 2479 to 2494 (PSPESPDQWSSSSPHS) are enriched in low complexity. Positions 2495–2514 (NMSDWSEGISSPPTSMQPQR) are enriched in polar residues.

The protein belongs to the NOTCH family. In terms of processing, O-glycosylated on the EGF-like domains. Contains both O-linked fucose and O-linked glucose. O-linked glycosylation by galnt11 is involved in determination of left/right symmetry: glycosylation promotes activation of notch1, possibly by promoting cleavage by adam17, modulating the balance between motile and immotile (sensory) cilia at the left-right organiser (LRO). Post-translationally, synthesized in the endoplasmic reticulum as an inactive form which is proteolytically cleaved by a furin-like convertase in the trans-Golgi network before it reaches the plasma membrane to yield an active, ligand-accessible form. Cleavage results in a C-terminal fragment N(TM) and a N-terminal fragment N(EC). Following ligand binding, it is cleaved by adam17 to yield a membrane-associated intermediate fragment called notch extracellular truncation (NEXT). Following endocytosis, this fragment is then cleaved by presenilin dependent gamma-secretase to release a Notch-derived peptide containing the intracellular domain (NICD) from the membrane.

It localises to the cell membrane. The protein resides in the nucleus. Functions as a receptor for membrane-bound ligands Jagged-1 (JAG1), Jagged-2 (JAG2) and Delta-1 (DLL1) to regulate cell-fate determination. Upon ligand activation through the released notch intracellular domain (NICD) it forms a transcriptional activator complex with RBPJ/RBPSUH and activates genes of the enhancer of split locus. Affects the implementation of differentiation, proliferation and apoptotic programs. Involved in angiogenesis; negatively regulates endothelial cell proliferation and migration and angiogenic sprouting. Involved in the maturation of both CD4(+) and CD8(+) cells in the thymus. Important for follicular differentiation and possibly cell fate selection within the follicle. During cerebellar development, functions as a receptor for neuronal DNER and is involved in the differentiation of Bergmann glia. Represses neuronal and myogenic differentiation. May play an essential role in postimplantation development, probably in some aspect of cell specification and/or differentiation. May be involved in mesoderm development, somite formation and neurogenesis. Involved in determination of left/right symmetry by modulating the balance between motile and immotile (sensory) cilia at the left-right organiser (LRO). The polypeptide is Neurogenic locus notch homolog protein 1 (notch1) (Xenopus tropicalis (Western clawed frog)).